Reading from the N-terminus, the 281-residue chain is Energy-coupling factor transporter ATP-binding protein EcfA1 (281 aa).

The ABC transporter domain maps to 6–242; that stretch reads IDVKHLDYRY…GEALIKMGLD (237 aa). ATP is bound at residue 42 to 49; it reads GHNGSGKS.

The protein belongs to the ABC transporter superfamily. Energy-coupling factor EcfA family. Forms a stable energy-coupling factor (ECF) transporter complex composed of 2 membrane-embedded substrate-binding proteins (S component), 2 ATP-binding proteins (A component) and 2 transmembrane proteins (T component).

The protein resides in the cell membrane. ATP-binding (A) component of a common energy-coupling factor (ECF) ABC-transporter complex. Unlike classic ABC transporters this ECF transporter provides the energy necessary to transport a number of different substrates. This chain is Energy-coupling factor transporter ATP-binding protein EcfA1, found in Lactiplantibacillus plantarum (strain ATCC BAA-793 / NCIMB 8826 / WCFS1) (Lactobacillus plantarum).